The sequence spans 114 residues: MTQAKAIARTVRIAPRKVRLVVDLIRGKQVGEAVAILRHTPKAASPVVEKVLKSAVANAEHNYDLDINSLVVSEVFVDEGPTLKRFRPRAQGRASAINKRTSHITLVVSEKKEG.

The protein belongs to the universal ribosomal protein uL22 family. Part of the 50S ribosomal subunit.

This protein binds specifically to 23S rRNA; its binding is stimulated by other ribosomal proteins, e.g. L4, L17, and L20. It is important during the early stages of 50S assembly. It makes multiple contacts with different domains of the 23S rRNA in the assembled 50S subunit and ribosome. Functionally, the globular domain of the protein is located near the polypeptide exit tunnel on the outside of the subunit, while an extended beta-hairpin is found that lines the wall of the exit tunnel in the center of the 70S ribosome. The sequence is that of Large ribosomal subunit protein uL22 from Lysinibacillus sphaericus (strain C3-41).